The following is a 332-amino-acid chain: Putative pumilio homolog 17 (332 aa).

In terms of domain architecture, PUM-HD spans 1 to 302 (MTNINRLSMS…ILTADLFYSL (302 aa)). The Pumilio 1 repeat unit spans residues 82–117 (SDSDYFMVITRNKNGSKSLQKLMRMSDDMDVFFFVA). The stretch at 118–152 (IMRLFIHVMIDKYASYVAIQGMRIFKQDKRELMYD) is one Pumilio 2; degenerate repeat. Pumilio repeat units follow at residues 153–188 (HILR…DELM), 189–225 (DIVS…NIAD), 226–264 (KLCG…DLLA), and 265–300 (CKTE…DLFY).

Its subcellular location is the cytoplasm. Functionally, sequence-specific RNA-binding protein that regulates translation and mRNA stability by binding the 3'-UTR of target mRNAs. In Arabidopsis thaliana (Mouse-ear cress), this protein is Putative pumilio homolog 17 (APUM17).